Consider the following 262-residue polypeptide: Large ribosomal subunit protein eL8B (262 aa).

Positions 1–36 (MAPKGKKVAPAPLATKSAKSSESKNPLFESTPKNFG) are disordered.

It belongs to the eukaryotic ribosomal protein eL8 family. Component of the large ribosomal subunit. Mature ribosomes consist of a small (40S) and a large (60S) subunit. The 40S subunit contains about 32 different proteins and 1 molecule of RNA (18S). The 60S subunit contains 45 different proteins and 3 molecules of RNA (25S, 5.8S and 5S).

The protein localises to the cytoplasm. Its function is as follows. Component of the ribosome, a large ribonucleoprotein complex responsible for the synthesis of proteins in the cell. The small ribosomal subunit (SSU) binds messenger RNAs (mRNAs) and translates the encoded message by selecting cognate aminoacyl-transfer RNA (tRNA) molecules. The large subunit (LSU) contains the ribosomal catalytic site termed the peptidyl transferase center (PTC), which catalyzes the formation of peptide bonds, thereby polymerizing the amino acids delivered by tRNAs into a polypeptide chain. The nascent polypeptides leave the ribosome through a tunnel in the LSU and interact with protein factors that function in enzymatic processing, targeting, and the membrane insertion of nascent chains at the exit of the ribosomal tunnel. The polypeptide is Large ribosomal subunit protein eL8B (Candida albicans (strain SC5314 / ATCC MYA-2876) (Yeast)).